The primary structure comprises 138 residues: Large ribosomal subunit protein uL16 (138 aa).

Belongs to the universal ribosomal protein uL16 family. Part of the 50S ribosomal subunit.

Binds 23S rRNA and is also seen to make contacts with the A and possibly P site tRNAs. This is Large ribosomal subunit protein uL16 from Mycoplasma genitalium (strain ATCC 33530 / DSM 19775 / NCTC 10195 / G37) (Mycoplasmoides genitalium).